A 690-amino-acid chain; its full sequence is Translation initiation factor IF-2 (690 aa).

The 169-residue stretch at 178–346 (PRPPVVTVMG…MILLVAEMNE (169 aa)) folds into the tr-type G domain. Residues 187-194 (GHVDHGKT) form a G1 region. Residue 187–194 (GHVDHGKT) participates in GTP binding. The G2 stretch occupies residues 212–216 (GITQS). The interval 233 to 236 (DTPG) is G3. Residues 233-237 (DTPGH) and 287-290 (NKID) contribute to the GTP site. The tract at residues 287-290 (NKID) is G4. Residues 324–326 (SAR) are G5.

The protein belongs to the TRAFAC class translation factor GTPase superfamily. Classic translation factor GTPase family. IF-2 subfamily.

It localises to the cytoplasm. One of the essential components for the initiation of protein synthesis. Protects formylmethionyl-tRNA from spontaneous hydrolysis and promotes its binding to the 30S ribosomal subunits. Also involved in the hydrolysis of GTP during the formation of the 70S ribosomal complex. The chain is Translation initiation factor IF-2 from Thermotoga sp. (strain RQ2).